The following is a 69-amino-acid chain: Protein transport protein Sec61 subunit gamma (69 aa).

Residues 1–32 (MDAVDSVVDPLREFAKDSVRLVKRCHKPDRKE) are Cytoplasmic-facing. A helical membrane pass occupies residues 33-61 (FTKVAARTAIGFVVMGFVGFFVKLIFIPI). The Extracellular segment spans residues 62–69 (NNIIVGSG).

This sequence belongs to the SecE/SEC61-gamma family. Heterotrimeric complex composed of SEC61-alpha, SEC61-beta and SEC61-gamma.

It is found in the endoplasmic reticulum membrane. Functionally, necessary for protein translocation in the endoplasmic reticulum. The protein is Protein transport protein Sec61 subunit gamma of Oryza sativa subsp. japonica (Rice).